The sequence spans 155 residues: Large ribosomal subunit protein uL15 (155 aa).

Positions 1 to 13 (MKLNELRDAEGAT) are enriched in basic and acidic residues. The segment at 1 to 41 (MKLNELRDAEGATKARKRVGRGIGSGSGKTGGRGVKGQKSR) is disordered. Positions 21 to 35 (RGIGSGSGKTGGRGV) are enriched in gly residues.

This sequence belongs to the universal ribosomal protein uL15 family. In terms of assembly, part of the 50S ribosomal subunit.

Its function is as follows. Binds to the 23S rRNA. In Chelativorans sp. (strain BNC1), this protein is Large ribosomal subunit protein uL15.